Reading from the N-terminus, the 69-residue chain is MSVLTPLLLRGLTGSARRLPVPCARVHSKPPREQLGTMDIAIGLTSCFVCFLLPSGWVLSHLENYKKRE.

Residues 1–25 constitute a mitochondrion transit peptide; the sequence is MSVLTPLLLRGLTGSARRLPVPCAR. The SIFI-degron signature appears at 2 to 19; that stretch reads SVLTPLLLRGLTGSARRL. Topologically, residues 26 to 36 are mitochondrial matrix; it reads VHSKPPREQLG. A helical membrane pass occupies residues 37–60; it reads TMDIAIGLTSCFVCFLLPSGWVLS. At 61 to 69 the chain is on the mitochondrial intermembrane side; it reads HLENYKKRE.

The protein belongs to the cytochrome c oxidase VIII family. Component of the cytochrome c oxidase (complex IV, CIV), a multisubunit enzyme composed of 14 subunits. The complex is composed of a catalytic core of 3 subunits MT-CO1, MT-CO2 and MT-CO3, encoded in the mitochondrial DNA, and 11 supernumerary subunits COX4I, COX5A, COX5B, COX6A, COX6B, COX6C, COX7A, COX7B, COX7C, COX8 and NDUFA4, which are encoded in the nuclear genome. The complex exists as a monomer or a dimer and forms supercomplexes (SCs) in the inner mitochondrial membrane with NADH-ubiquinone oxidoreductase (complex I, CI) and ubiquinol-cytochrome c oxidoreductase (cytochrome b-c1 complex, complex III, CIII), resulting in different assemblies (supercomplex SCI(1)III(2)IV(1) and megacomplex MCI(2)III(2)IV(2)). Post-translationally, in response to mitochondrial stress, the precursor protein is ubiquitinated by the SIFI complex in the cytoplasm before mitochondrial import, leading to its degradation. Within the SIFI complex, UBR4 initiates ubiquitin chain that are further elongated or branched by KCMF1.

Its subcellular location is the mitochondrion inner membrane. It participates in energy metabolism; oxidative phosphorylation. Component of the cytochrome c oxidase, the last enzyme in the mitochondrial electron transport chain which drives oxidative phosphorylation. The respiratory chain contains 3 multisubunit complexes succinate dehydrogenase (complex II, CII), ubiquinol-cytochrome c oxidoreductase (cytochrome b-c1 complex, complex III, CIII) and cytochrome c oxidase (complex IV, CIV), that cooperate to transfer electrons derived from NADH and succinate to molecular oxygen, creating an electrochemical gradient over the inner membrane that drives transmembrane transport and the ATP synthase. Cytochrome c oxidase is the component of the respiratory chain that catalyzes the reduction of oxygen to water. Electrons originating from reduced cytochrome c in the intermembrane space (IMS) are transferred via the dinuclear copper A center (CU(A)) of subunit 2 and heme A of subunit 1 to the active site in subunit 1, a binuclear center (BNC) formed by heme A3 and copper B (CU(B)). The BNC reduces molecular oxygen to 2 water molecules using 4 electrons from cytochrome c in the IMS and 4 protons from the mitochondrial matrix. This chain is Cytochrome c oxidase subunit 8A, mitochondrial (COX8A), found in Otolemur crassicaudatus (Brown greater galago).